A 178-amino-acid chain; its full sequence is Large ribosomal subunit protein uL6 (178 aa).

It belongs to the universal ribosomal protein uL6 family. In terms of assembly, part of the 50S ribosomal subunit.

Functionally, this protein binds to the 23S rRNA, and is important in its secondary structure. It is located near the subunit interface in the base of the L7/L12 stalk, and near the tRNA binding site of the peptidyltransferase center. The sequence is that of Large ribosomal subunit protein uL6 from Streptococcus agalactiae serotype Ia (strain ATCC 27591 / A909 / CDC SS700).